The chain runs to 1845 residues: Proteasome activator complex subunit 4 (1845 aa).

Basic and acidic residues predominate over residues 1–13 (MEPAERAGGRDPL). The disordered stretch occupies residues 1-26 (MEPAERAGGRDPLEPGGRPGPDPQGF). 2 HEAT repeats span residues 475 to 519 (PEGP…LVDC) and 1000 to 1039 (NFCC…NHSG). Ser-1123 bears the Phosphoserine mark. HEAT repeat units follow at residues 1181–1219 (RVLP…QLKR) and 1356–1394 (DAFL…GSKH). Ser-1616 is subject to Phosphoserine. HEAT repeat units follow at residues 1638–1676 (PHQV…YNLF) and 1682–1720 (EDAV…CNFL). A bromodomain-like (BRDL) region spans residues 1652 to 1740 (ARSSSWHARY…EQLCKTKLPK (89 aa)).

The protein belongs to the BLM10 family. Homodimer. Component of the spermatoproteasome, a form of the proteasome specifically found in testis. Interacts with the 20S and 26S proteasomes. Phosphorylated.

The protein localises to the cytoplasm. It is found in the cytosol. It localises to the nucleus. Its subcellular location is the nucleus speckle. Functionally, associated component of the proteasome that specifically recognizes acetylated histones and promotes ATP- and ubiquitin-independent degradation of core histones during spermatogenesis and DNA damage response. Recognizes and binds acetylated histones via its bromodomain-like (BRDL) region and activates the proteasome by opening the gated channel for substrate entry. Binds to the core proteasome via its C-terminus, which occupies the same binding sites as the proteasomal ATPases, opening the closed structure of the proteasome via an active gating mechanism. Component of the spermatoproteasome, a form of the proteasome specifically found in testis: binds to acetylated histones and promotes degradation of histones, thereby participating actively to the exchange of histones during spermatogenesis. Also involved in DNA damage response in somatic cells, by promoting degradation of histones following DNA double-strand breaks. This Bos taurus (Bovine) protein is Proteasome activator complex subunit 4 (PSME4).